We begin with the raw amino-acid sequence, 291 residues long: 33 kDa chaperonin (291 aa).

2 disulfides stabilise this stretch: cysteine 229–cysteine 231 and cysteine 262–cysteine 265.

It belongs to the HSP33 family. Post-translationally, under oxidizing conditions two disulfide bonds are formed involving the reactive cysteines. Under reducing conditions zinc is bound to the reactive cysteines and the protein is inactive.

The protein localises to the cytoplasm. In terms of biological role, redox regulated molecular chaperone. Protects both thermally unfolding and oxidatively damaged proteins from irreversible aggregation. Plays an important role in the bacterial defense system toward oxidative stress. This is 33 kDa chaperonin from Aliivibrio salmonicida (strain LFI1238) (Vibrio salmonicida (strain LFI1238)).